A 200-amino-acid polypeptide reads, in one-letter code: Recombination protein RecR (200 aa).

The segment at 59–74 (CDICGNVCESSPCPVC) adopts a C4-type zinc-finger fold. The Toprim domain occupies 82–177 (SVICVVEEPK…KVTRLASGLP (96 aa)).

The protein belongs to the RecR family.

May play a role in DNA repair. It seems to be involved in an RecBC-independent recombinational process of DNA repair. It may act with RecF and RecO. This chain is Recombination protein RecR, found in Bifidobacterium longum subsp. infantis (strain ATCC 15697 / DSM 20088 / JCM 1222 / NCTC 11817 / S12).